Consider the following 92-residue polypeptide: uncharacterized protein (92 aa).

The next 3 helical transmembrane spans lie at 1–21, 30–50, and 62–82; these read MNIY…LVGL, ANVL…IVVI, and IALA…KVIG.

The protein to M.thermoautotrophicum MTH1250.

It is found in the cell membrane. This is an uncharacterized protein from Methanocaldococcus jannaschii (strain ATCC 43067 / DSM 2661 / JAL-1 / JCM 10045 / NBRC 100440) (Methanococcus jannaschii).